Here is a 346-residue protein sequence, read N- to C-terminus: Tyrosine--tRNA ligase (346 aa).

Y35 contributes to the L-tyrosine binding site. Positions 40–48 match the 'HIGH' region motif; it reads PTGEMHIGH. L-tyrosine-binding residues include Y162, Q166, D169, and Q184.

The protein belongs to the class-I aminoacyl-tRNA synthetase family. TyrS type 3 subfamily. As to quaternary structure, homodimer.

The protein localises to the cytoplasm. The enzyme catalyses tRNA(Tyr) + L-tyrosine + ATP = L-tyrosyl-tRNA(Tyr) + AMP + diphosphate + H(+). Catalyzes the attachment of tyrosine to tRNA(Tyr) in a two-step reaction: tyrosine is first activated by ATP to form Tyr-AMP and then transferred to the acceptor end of tRNA(Tyr). The chain is Tyrosine--tRNA ligase from Haloarcula marismortui (strain ATCC 43049 / DSM 3752 / JCM 8966 / VKM B-1809) (Halobacterium marismortui).